A 100-amino-acid chain; its full sequence is Aspartyl/glutamyl-tRNA(Asn/Gln) amidotransferase subunit C (100 aa).

This sequence belongs to the GatC family. Heterotrimer of A, B and C subunits.

It carries out the reaction L-glutamyl-tRNA(Gln) + L-glutamine + ATP + H2O = L-glutaminyl-tRNA(Gln) + L-glutamate + ADP + phosphate + H(+). The enzyme catalyses L-aspartyl-tRNA(Asn) + L-glutamine + ATP + H2O = L-asparaginyl-tRNA(Asn) + L-glutamate + ADP + phosphate + 2 H(+). Functionally, allows the formation of correctly charged Asn-tRNA(Asn) or Gln-tRNA(Gln) through the transamidation of misacylated Asp-tRNA(Asn) or Glu-tRNA(Gln) in organisms which lack either or both of asparaginyl-tRNA or glutaminyl-tRNA synthetases. The reaction takes place in the presence of glutamine and ATP through an activated phospho-Asp-tRNA(Asn) or phospho-Glu-tRNA(Gln). The chain is Aspartyl/glutamyl-tRNA(Asn/Gln) amidotransferase subunit C from Rickettsia rickettsii (strain Sheila Smith).